The primary structure comprises 213 residues: Large ribosomal subunit protein uL1 (213 aa).

Belongs to the universal ribosomal protein uL1 family. As to quaternary structure, part of the 50S ribosomal subunit.

In terms of biological role, binds directly to 23S rRNA. Probably involved in E site tRNA release. Functionally, protein L1 is also a translational repressor protein, it controls the translation of its operon by binding to its mRNA. The chain is Large ribosomal subunit protein uL1 from Methanococcus maripaludis (strain DSM 14266 / JCM 13030 / NBRC 101832 / S2 / LL).